The primary structure comprises 808 residues: Enhancer of polycomb homolog 2 (808 aa).

Residues K135, K195, and K324 each participate in a glycyl lysine isopeptide (Lys-Gly) (interchain with G-Cter in SUMO2) cross-link. The interval 337–357 (YPKKPKAEAGIAPQQPTPETL) is disordered. K362 is covalently cross-linked (Glycyl lysine isopeptide (Lys-Gly) (interchain with G-Cter in SUMO2)). Disordered regions lie at residues 371–397 (QSSD…PDGS), 595–630 (QRQQ…CMSK), and 645–682 (VSAP…LYST). The segment covering 595 to 614 (QRQQLAQLHQKQQSQHSSQQ) has biased composition (low complexity). Composition is skewed to polar residues over residues 615–630 (THPK…CMSK) and 658–682 (EQNT…LYST). S755 bears the Phosphoserine mark.

The protein belongs to the enhancer of polycomb family.

Its subcellular location is the nucleus. Its function is as follows. May play a role in transcription or DNA repair. In Mus musculus (Mouse), this protein is Enhancer of polycomb homolog 2 (Epc2).